A 97-amino-acid polypeptide reads, in one-letter code: YcgL domain-containing protein PputGB1_4120 (97 aa).

The 85-residue stretch at arginine 3–proline 87 folds into the YcgL domain.

This chain is YcgL domain-containing protein PputGB1_4120, found in Pseudomonas putida (strain GB-1).